The sequence spans 683 residues: Glucosylceramidase (683 aa).

Glutamate 254 functions as the Proton donor in the catalytic mechanism. The active-site Nucleophile is the glutamate 483.

The protein belongs to the glycosyl hydrolase 5 (cellulase A) family.

Its subcellular location is the membrane. It catalyses the reaction a beta-D-glucosyl-(1&lt;-&gt;1')-N-acylsphing-4-enine + H2O = an N-acylsphing-4-enine + D-glucose. With respect to regulation, inhibited by metal cations Co(2+), Cu(2+), Ni(2+), Pb(2+) and Zn(2+). Not inhibited by metal chelator ethylenediaminetetraacetic acid (EDTA). Functionally, specifically hydrolyzes the glucosidic linkage in glucosylceramide. May prevent accumulation of aberrent glucosylceramide containing immature ceramide. This Rhizopus delemar (strain RA 99-880 / ATCC MYA-4621 / FGSC 9543 / NRRL 43880) (Mucormycosis agent) protein is Glucosylceramidase.